Consider the following 615-residue polypeptide: Elongation factor 4 (615 aa).

Positions 14-200 (QQIRNFCIIA…KVAELIPAPT (187 aa)) constitute a tr-type G domain. Residues 26-31 (DHGKST) and 147-150 (NKID) contribute to the GTP site.

The protein belongs to the TRAFAC class translation factor GTPase superfamily. Classic translation factor GTPase family. LepA subfamily.

It localises to the cell membrane. The catalysed reaction is GTP + H2O = GDP + phosphate + H(+). Required for accurate and efficient protein synthesis under certain stress conditions. May act as a fidelity factor of the translation reaction, by catalyzing a one-codon backward translocation of tRNAs on improperly translocated ribosomes. Back-translocation proceeds from a post-translocation (POST) complex to a pre-translocation (PRE) complex, thus giving elongation factor G a second chance to translocate the tRNAs correctly. Binds to ribosomes in a GTP-dependent manner. The chain is Elongation factor 4 from Corynebacterium diphtheriae (strain ATCC 700971 / NCTC 13129 / Biotype gravis).